Consider the following 621-residue polypeptide: uncharacterized protein (621 aa).

2 disordered regions span residues 92–134 (FRNS…QINQ) and 268–310 (KINH…DDEI). Positions 94–134 (NSSNQSSQSNQVNQSNQSSPSSQISPSSQVNKFNQSSQINQ) are enriched in low complexity. The span at 296 to 310 (TNDETNDETDNDDEI) shows a compositional bias: acidic residues. Residues 354-401 (ANKIQNKIIQIVETLNAYKNKQSQIAIEAKNKIKHITVSNKEVSENIE) are a coiled coil.

This is an uncharacterized protein from Acanthamoeba polyphaga mimivirus (APMV).